We begin with the raw amino-acid sequence, 400 residues long: Tryptophan synthase beta chain (400 aa).

Lysine 92 carries the post-translational modification N6-(pyridoxal phosphate)lysine.

Belongs to the TrpB family. In terms of assembly, tetramer of two alpha and two beta chains. Requires pyridoxal 5'-phosphate as cofactor.

The enzyme catalyses (1S,2R)-1-C-(indol-3-yl)glycerol 3-phosphate + L-serine = D-glyceraldehyde 3-phosphate + L-tryptophan + H2O. The protein operates within amino-acid biosynthesis; L-tryptophan biosynthesis; L-tryptophan from chorismate: step 5/5. In terms of biological role, the beta subunit is responsible for the synthesis of L-tryptophan from indole and L-serine. This Neisseria gonorrhoeae (strain NCCP11945) protein is Tryptophan synthase beta chain.